Consider the following 130-residue polypeptide: Small ribosomal subunit protein uS11c (130 aa).

Belongs to the universal ribosomal protein uS11 family. In terms of assembly, part of the 30S ribosomal subunit.

Its subcellular location is the plastid. It is found in the chloroplast. The sequence is that of Small ribosomal subunit protein uS11c from Phaeodactylum tricornutum (strain CCAP 1055/1).